The chain runs to 227 residues: Cytochrome c oxidase subunit 2 (227 aa).

The Mitochondrial intermembrane segment spans residues M1–S14. A helical transmembrane segment spans residues P15 to M45. Topologically, residues L46–Q59 are mitochondrial matrix. The helical transmembrane segment at E60–M87 threads the bilayer. The Mitochondrial intermembrane segment spans residues D88–L227. H161, C196, E198, C200, H204, and M207 together coordinate Cu cation. Position 198 (E198) interacts with Mg(2+).

The protein belongs to the cytochrome c oxidase subunit 2 family. In terms of assembly, component of the cytochrome c oxidase (complex IV, CIV), a multisubunit enzyme composed of 14 subunits. The complex is composed of a catalytic core of 3 subunits MT-CO1, MT-CO2 and MT-CO3, encoded in the mitochondrial DNA, and 11 supernumerary subunits COX4I, COX5A, COX5B, COX6A, COX6B, COX6C, COX7A, COX7B, COX7C, COX8 and NDUFA4, which are encoded in the nuclear genome. The complex exists as a monomer or a dimer and forms supercomplexes (SCs) in the inner mitochondrial membrane with NADH-ubiquinone oxidoreductase (complex I, CI) and ubiquinol-cytochrome c oxidoreductase (cytochrome b-c1 complex, complex III, CIII), resulting in different assemblies (supercomplex SCI(1)III(2)IV(1) and megacomplex MCI(2)III(2)IV(2)). Found in a complex with TMEM177, COA6, COX18, COX20, SCO1 and SCO2. Interacts with TMEM177 in a COX20-dependent manner. Interacts with COX20. Interacts with COX16. Cu cation serves as cofactor.

The protein resides in the mitochondrion inner membrane. It carries out the reaction 4 Fe(II)-[cytochrome c] + O2 + 8 H(+)(in) = 4 Fe(III)-[cytochrome c] + 2 H2O + 4 H(+)(out). Its function is as follows. Component of the cytochrome c oxidase, the last enzyme in the mitochondrial electron transport chain which drives oxidative phosphorylation. The respiratory chain contains 3 multisubunit complexes succinate dehydrogenase (complex II, CII), ubiquinol-cytochrome c oxidoreductase (cytochrome b-c1 complex, complex III, CIII) and cytochrome c oxidase (complex IV, CIV), that cooperate to transfer electrons derived from NADH and succinate to molecular oxygen, creating an electrochemical gradient over the inner membrane that drives transmembrane transport and the ATP synthase. Cytochrome c oxidase is the component of the respiratory chain that catalyzes the reduction of oxygen to water. Electrons originating from reduced cytochrome c in the intermembrane space (IMS) are transferred via the dinuclear copper A center (CU(A)) of subunit 2 and heme A of subunit 1 to the active site in subunit 1, a binuclear center (BNC) formed by heme A3 and copper B (CU(B)). The BNC reduces molecular oxygen to 2 water molecules using 4 electrons from cytochrome c in the IMS and 4 protons from the mitochondrial matrix. The chain is Cytochrome c oxidase subunit 2 (MT-CO2) from Hapalemur griseus (Gray gentle lemur).